Here is a 344-residue protein sequence, read N- to C-terminus: Meiotically up-regulated gene 10 protein (344 aa).

Residues 48–207 form the DH domain; the sequence is EFNSILQEII…RELCSYIDQE (160 aa).

Its subcellular location is the cytoplasm. The protein localises to the nucleus. Functionally, has a role in meiosis. This chain is Meiotically up-regulated gene 10 protein (mug10), found in Schizosaccharomyces pombe (strain 972 / ATCC 24843) (Fission yeast).